The sequence spans 102 residues: Large ribosomal subunit protein bL21 (102 aa).

The protein belongs to the bacterial ribosomal protein bL21 family. Part of the 50S ribosomal subunit. Contacts protein L20.

Functionally, this protein binds to 23S rRNA in the presence of protein L20. This Desulfovibrio desulfuricans (strain ATCC 27774 / DSM 6949 / MB) protein is Large ribosomal subunit protein bL21.